The sequence spans 273 residues: MTTASAIPDNDPLVLYGQTFHSRLLLGTARYPSPDLLEAAVKRAKPAMLTASLRRQSASPGASDSGNGFWELLRRLAVPVLPNTAGCHSVQEVIATAQMARELFDTPWIKLELIGDDYTLQPDTLNLVDAASQLIRDGFQVLPYCTEDLVLCQRLVDVGCQAVMPWAAPIGTGRGPVNPYALQLLRERLSVPMLVDAGLGLPSHACQVMEWGYDGVLLNTAVALAQDPVSMAGAFADAVQAGRAAHRAGAMAAQDSAQPSTPVLGTPFWHHAP.

The active-site Schiff-base intermediate with DXP is the Lys-110. Residues Gly-171, 197-198 (AG), and 219-220 (NT) contribute to the 1-deoxy-D-xylulose 5-phosphate site. The tract at residues 251 to 273 (MAAQDSAQPSTPVLGTPFWHHAP) is disordered.

The protein belongs to the ThiG family. Homotetramer. Forms heterodimers with either ThiH or ThiS.

It localises to the cytoplasm. The enzyme catalyses [ThiS sulfur-carrier protein]-C-terminal-Gly-aminoethanethioate + 2-iminoacetate + 1-deoxy-D-xylulose 5-phosphate = [ThiS sulfur-carrier protein]-C-terminal Gly-Gly + 2-[(2R,5Z)-2-carboxy-4-methylthiazol-5(2H)-ylidene]ethyl phosphate + 2 H2O + H(+). It participates in cofactor biosynthesis; thiamine diphosphate biosynthesis. Its function is as follows. Catalyzes the rearrangement of 1-deoxy-D-xylulose 5-phosphate (DXP) to produce the thiazole phosphate moiety of thiamine. Sulfur is provided by the thiocarboxylate moiety of the carrier protein ThiS. In vitro, sulfur can be provided by H(2)S. The chain is Thiazole synthase from Variovorax paradoxus (strain S110).